The primary structure comprises 213 residues: Vacuolar protein sorting-associated protein 32 homolog 1 (213 aa).

2 coiled-coil regions span residues Lys11 to Thr42 and Thr118 to Gln176. A disordered region spans residues Ile180 to Leu213.

This sequence belongs to the SNF7 family. Component of the endosomal sorting required for transport complex III (ESCRT-III), composed at least of VPS2, VPS20, VPS24 and VPS32. Interacts with SKD1. Interacts with BRO1/ALIX.

The protein localises to the endosome. In terms of biological role, component of the ESCRT-III complex, which is required for multivesicular bodies (MVBs) formation and sorting of endosomal cargo proteins into MVBs. The ESCRT-III complex is probably involved in the concentration of MVB cargo. In Arabidopsis thaliana (Mouse-ear cress), this protein is Vacuolar protein sorting-associated protein 32 homolog 1 (VPS32.1).